We begin with the raw amino-acid sequence, 180 residues long: Centromere protein M (180 aa).

It localises to the nucleus. It is found in the chromosome. The protein localises to the centromere. Functionally, probable component of a centromeric complex involved in assembly of kinetochore proteins, mitotic progression and chromosome segregation. The sequence is that of Centromere protein M (cenpm) from Xenopus laevis (African clawed frog).